A 711-amino-acid polypeptide reads, in one-letter code: Consortin (711 aa).

Disordered stretches follow at residues Met1–Pro157, Ala294–Gln332, Glu370–Ser389, Pro394–Ile432, and Pro457–Leu496. The Cytoplasmic portion of the chain corresponds to Met1 to Ser650. Residues Val63–Ser77 are compositionally biased toward polar residues. Positions Pro109–Ser120 are enriched in basic residues. Basic and acidic residues-rich tracts occupy residues Thr396 to Lys407 and Pro457 to Gln471. Polar residues predominate over residues Asp478 to Gly487. The helical transmembrane segment at Cys651 to Leu671 threads the bilayer. Topologically, residues Tyr672 to Ser711 are extracellular.

It belongs to the CNST family. As to quaternary structure, interacts with connexins GJA1/CX43, GJB1/CX32, GJB2/CX26, GJB3/CX31, GJB6/CX30 and GJC1/CX45. Also interacts with GGA1 and GGA2. Does not interact with PANX1.

It localises to the cell membrane. Its subcellular location is the golgi apparatus. The protein localises to the trans-Golgi network membrane. The protein resides in the cytoplasmic vesicle. It is found in the secretory vesicle. Functionally, required for targeting of connexins to the plasma membrane. The sequence is that of Consortin (Cnst) from Mus musculus (Mouse).